The chain runs to 242 residues: 6-carboxyhexanoate--CoA ligase (242 aa).

This sequence belongs to the BioW family. In terms of assembly, homodimer. The cofactor is Mg(2+).

It carries out the reaction heptanedioate + ATP + CoA = 6-carboxyhexanoyl-CoA + AMP + diphosphate. The protein operates within metabolic intermediate metabolism; pimeloyl-CoA biosynthesis; pimeloyl-CoA from pimelate: step 1/1. Its function is as follows. Catalyzes the transformation of pimelate into pimeloyl-CoA with concomitant hydrolysis of ATP to AMP. The polypeptide is 6-carboxyhexanoate--CoA ligase (Veillonella parvula (strain ATCC 10790 / DSM 2008 / CCUG 5123 / JCM 12972 / NCTC 11810 / Te3) (Veillonella alcalescens)).